Reading from the N-terminus, the 294-residue chain is 33 kDa chaperonin (294 aa).

2 cysteine pairs are disulfide-bonded: cysteine 230-cysteine 232 and cysteine 263-cysteine 266.

This sequence belongs to the HSP33 family. In terms of processing, under oxidizing conditions two disulfide bonds are formed involving the reactive cysteines. Under reducing conditions zinc is bound to the reactive cysteines and the protein is inactive.

It localises to the cytoplasm. In terms of biological role, redox regulated molecular chaperone. Protects both thermally unfolding and oxidatively damaged proteins from irreversible aggregation. Plays an important role in the bacterial defense system toward oxidative stress. This is 33 kDa chaperonin from Chromobacterium violaceum (strain ATCC 12472 / DSM 30191 / JCM 1249 / CCUG 213 / NBRC 12614 / NCIMB 9131 / NCTC 9757 / MK).